The sequence spans 374 residues: Cathepsin W (374 aa).

The signal sequence occupies residues 1–21 (MAITVYLSCLLVLSMAGLAQG). Residues 22-127 (IKSSLRSQDP…EVGSEEWGES (106 aa)) constitute a propeptide that is removed on maturation. Intrachain disulfides connect cysteine 150/cysteine 191 and cysteine 184/cysteine 226. The active site involves cysteine 153. Residue asparagine 205 is glycosylated (N-linked (GlcNAc...) asparagine). Catalysis depends on residues histidine 291 and asparagine 329. Asparagine 347 is a glycosylation site (N-linked (GlcNAc...) asparagine).

Belongs to the peptidase C1 family.

Its subcellular location is the endoplasmic reticulum. Its function is as follows. May have a specific function in the mechanism or regulation of T-cell cytolytic activity. The polypeptide is Cathepsin W (CTSW) (Felis catus (Cat)).